A 236-amino-acid chain; its full sequence is Small ribosomal subunit protein uS3 (236 aa).

A KH type-2 domain is found at 38-106; the sequence is LRRYLHTRLK…DIQINISEIK (69 aa). The tract at residues 211-236 is disordered; sequence DLSPNVQAQQRKMKESPQQRRQRRGG.

It belongs to the universal ribosomal protein uS3 family. Part of the 30S ribosomal subunit. Forms a tight complex with proteins S10 and S14.

Binds the lower part of the 30S subunit head. Binds mRNA in the 70S ribosome, positioning it for translation. In Salinibacter ruber (strain DSM 13855 / M31), this protein is Small ribosomal subunit protein uS3.